Reading from the N-terminus, the 120-residue chain is Large ribosomal subunit protein uL24 (120 aa).

It belongs to the universal ribosomal protein uL24 family. As to quaternary structure, part of the 50S ribosomal subunit.

In terms of biological role, one of two assembly initiator proteins, it binds directly to the 5'-end of the 23S rRNA, where it nucleates assembly of the 50S subunit. Its function is as follows. Located at the polypeptide exit tunnel on the outside of the subunit. This chain is Large ribosomal subunit protein uL24, found in Methanocaldococcus jannaschii (strain ATCC 43067 / DSM 2661 / JAL-1 / JCM 10045 / NBRC 100440) (Methanococcus jannaschii).